Reading from the N-terminus, the 293-residue chain is Small ribosomal subunit biogenesis GTPase RsgA (293 aa).

The region spanning 63 to 223 (KNELVRPPIA…VADTPGFSSL (161 aa)) is the CP-type G domain. GTP contacts are provided by residues 112 to 115 (SKMD) and 166 to 174 (GQSGVGKSS). Zn(2+) contacts are provided by Cys247, Cys252, His254, and Cys260.

It belongs to the TRAFAC class YlqF/YawG GTPase family. RsgA subfamily. As to quaternary structure, monomer. Associates with 30S ribosomal subunit, binds 16S rRNA. Zn(2+) is required as a cofactor.

It is found in the cytoplasm. Its function is as follows. One of several proteins that assist in the late maturation steps of the functional core of the 30S ribosomal subunit. Helps release RbfA from mature subunits. May play a role in the assembly of ribosomal proteins into the subunit. Circularly permuted GTPase that catalyzes slow GTP hydrolysis, GTPase activity is stimulated by the 30S ribosomal subunit. This Bacillus cytotoxicus (strain DSM 22905 / CIP 110041 / 391-98 / NVH 391-98) protein is Small ribosomal subunit biogenesis GTPase RsgA.